Here is a 388-residue protein sequence, read N- to C-terminus: Lipid-A-disaccharide synthase (388 aa).

This sequence belongs to the LpxB family.

The catalysed reaction is a lipid X + a UDP-2-N,3-O-bis[(3R)-3-hydroxyacyl]-alpha-D-glucosamine = a lipid A disaccharide + UDP + H(+). It participates in bacterial outer membrane biogenesis; LPS lipid A biosynthesis. Condensation of UDP-2,3-diacylglucosamine and 2,3-diacylglucosamine-1-phosphate to form lipid A disaccharide, a precursor of lipid A, a phosphorylated glycolipid that anchors the lipopolysaccharide to the outer membrane of the cell. The sequence is that of Lipid-A-disaccharide synthase from Burkholderia pseudomallei (strain K96243).